The sequence spans 27 residues: Pyruvate dehydrogenase protein X component, mitochondrial (27 aa).

The segment at 1–27 is disordered; that stretch reads FRLSPAARNILEKHSLDASQGTATGPR. Residues 2–27 form the Peripheral subunit-binding (PSBD) domain; sequence RLSPAARNILEKHSLDASQGTATGPR. At lysine 13 the chain carries N6-acetyllysine. Position 15 is a phosphoserine (serine 15). Residues 17 to 27 are compositionally biased toward polar residues; the sequence is DASQGTATGPR.

It belongs to the 2-oxoacid dehydrogenase family. Part of the inner core of the multimeric pyruvate dehydrogenase complex that is composed of about 48 DLAT and 12 PDHX molecules. This core binds multiple copies of pyruvate dehydrogenase (subunits PDH1A and PDHB, E1), dihydrolipoamide acetyltransferase (DLAT, E2) and lipoamide dehydrogenase (DLD, E3). Interacts with SIRT4. Interacts with DLD.

The protein localises to the mitochondrion matrix. Required for anchoring dihydrolipoamide dehydrogenase (E3) to the dihydrolipoamide transacetylase (E2) core of the pyruvate dehydrogenase complexes of eukaryotes. This specific binding is essential for a functional PDH complex. The polypeptide is Pyruvate dehydrogenase protein X component, mitochondrial (Mesocricetus auratus (Golden hamster)).